Here is a 130-residue protein sequence, read N- to C-terminus: Cysteine methyltransferase (130 aa).

The enzyme catalyses [trehalose-6-phosphate synthase]-L-cysteine + S-adenosyl-L-methionine = [trehalose-6-phosphate synthase]-S-methyl-L-cysteine + S-adenosyl-L-homocysteine + H(+). Its function is as follows. S-adenosyl-L-methionine-dependent protein-cysteine S-methyltransferase with broad substrate specificity. Methylates trehalose-6-phosphate synthase (TPS), enhancing its enzymatic activity and promoting trehalose synthesis upon entry of cells into stationary phase. In Saccharomyces cerevisiae (Baker's yeast), this protein is Cysteine methyltransferase.